Reading from the N-terminus, the 180-residue chain is Beta-lactoglobulin (180 aa).

Positions 1-18 are cleaved as a signal peptide; it reads MKCLLLALGLALACAAQA. Cystine bridges form between C84–C178, C124–C137, and C124–C139.

The protein belongs to the calycin superfamily. Lipocalin family. As to quaternary structure, under physiological conditions beta-lactoglobulin exists as an equilibrium mixture of monomeric and dimeric forms. Interaction with LMBR1L is controversial. Post-translationally, alternate disulfide bonds occur in equal amounts. In terms of tissue distribution, synthesized in mammary gland and secreted in milk.

The protein localises to the secreted. Its function is as follows. Primary component of whey, it binds retinol and is probably involved in the transport of that molecule. The protein is Beta-lactoglobulin (LGB) of Bubalus bubalis (Domestic water buffalo).